Reading from the N-terminus, the 250-residue chain is Ribose-5-phosphate isomerase A (250 aa).

Substrate contacts are provided by residues 33–36, 89–92, and 102–105; these read TGST, DGAD, and KGGG. The active-site Proton acceptor is the glutamate 111. A substrate-binding site is contributed by lysine 129.

Belongs to the ribose 5-phosphate isomerase family. Homodimer.

The catalysed reaction is aldehydo-D-ribose 5-phosphate = D-ribulose 5-phosphate. It participates in carbohydrate degradation; pentose phosphate pathway; D-ribose 5-phosphate from D-ribulose 5-phosphate (non-oxidative stage): step 1/1. Functionally, catalyzes the reversible conversion of ribose-5-phosphate to ribulose 5-phosphate. The chain is Ribose-5-phosphate isomerase A from Cereibacter sphaeroides (strain ATCC 17025 / ATH 2.4.3) (Rhodobacter sphaeroides).